The primary structure comprises 168 residues: Peptidoglycan-associated lipoprotein (168 aa).

Residues 1–24 form the signal peptide; the sequence is MRRIQSIARSPIAIALFMSLAVAG. Cysteine 25 carries the N-palmitoyl cysteine lipid modification. Cysteine 25 carries the S-diacylglycerol cysteine lipid modification. Residues 51–167 enclose the OmpA-like domain; that stretch reads QDFTVNVGDR…RAVTVLNGAG (117 aa).

The protein belongs to the Pal lipoprotein family. In terms of assembly, the Tol-Pal system is composed of five core proteins: the inner membrane proteins TolA, TolQ and TolR, the periplasmic protein TolB and the outer membrane protein Pal. They form a network linking the inner and outer membranes and the peptidoglycan layer. In terms of processing, the N-terminus is blocked.

Its subcellular location is the cell outer membrane. Part of the Tol-Pal system, which plays a role in outer membrane invagination during cell division and is important for maintaining outer membrane integrity. This is Peptidoglycan-associated lipoprotein from Brucella abortus biovar 1 (strain 9-941).